The following is an 868-amino-acid chain: Sporulation-specific protein 75 (868 aa).

Residues 1-34 are Extracellular-facing; the sequence is MNATKELTFNLLNKFQDKERFGSAQRHAGISLKG. Asn2 carries an N-linked (GlcNAc...) asparagine glycan. A helical transmembrane segment spans residues 35–55; sequence FISGILFSFLYFLFQLSLFII. At 56-127 the chain is on the cytoplasmic side; that stretch reads LRSRFKTIYQ…DNYLFLRFLK (72 aa). A helical membrane pass occupies residues 128–148; it reads LLIFFFAVLSIINIPILIPIH. Topologically, residues 149–187 are extracellular; the sequence is YFSRDILKENEGERYEQSFRTTSKLDKWTMSNLSPNSSN. Asn184 carries an N-linked (GlcNAc...) asparagine glycan. A helical transmembrane segment spans residues 188-208; sequence TLICHLFLSIFVVLWFHFILS. Residues 209 to 481 lie on the Cytoplasmic side of the membrane; it reads SELRFVNRLG…AKYFSANILR (273 aa). A helical membrane pass occupies residues 482 to 502; that stretch reads IFVIIGWILPVAFLGLISQIP. Asn503 carries an N-linked (GlcNAc...) asparagine glycan. Over 503–527 the chain is Extracellular; it reads NISSLIPFTKIIHFQSPFIREVAKN. A helical membrane pass occupies residues 528–548; that stretch reads LIPIVTLIIIIEIVPYFFRWL. Residues 549–569 lie on the Cytoplasmic side of the membrane; that stretch reads SYLRGLKTGAQIEADVQNWYF. The helical transmembrane segment at 570–590 threads the bilayer; the sequence is VFVFIHLFVVVTISSGFSIII. Over 591 to 611 the chain is Extracellular; sequence ERLLNNPVSIPALLANDLPKC. Residues 612-632 traverse the membrane as a helical segment; the sequence is ANFFCSFVLIRGMAYAGGNLL. At 633–660 the chain is on the cytoplasmic side; the sequence is RIKELLFELFYYKWKRSTPHAQFKRLKT. The helical transmembrane segment at 661 to 683 threads the bilayer; the sequence is SLFFQLGSIYPIFSVLGCIGIIY. The Extracellular segment spans residues 684–692; the sequence is SVVAPIILL. Residues 693–713 traverse the membrane as a helical segment; the sequence is LCCISFSMVFFSFSYLFKYQY. At 714–730 the chain is on the cytoplasmic side; the sequence is NKENYSETFGKLYIQAL. Residues 731-751 traverse the membrane as a helical segment; the sequence is MQLYAGIYFMEFCLLGLFTLF. The Extracellular portion of the chain corresponds to 752–753; it reads DQ. A helical membrane pass occupies residues 754 to 774; sequence YTLSTIMLVVFALTVITHSKI. Over 775 to 868 the chain is Cytoplasmic; it reads SKQIKSKPQR…DCHLENSHLH (94 aa).

This sequence belongs to the CSC1 (TC 1.A.17) family.

Its subcellular location is the membrane. Functionally, acts as an osmosensitive calcium-permeable cation channel. Required for spore wall assembly and ascus formation. The chain is Sporulation-specific protein 75 (SPO75) from Saccharomyces cerevisiae (strain ATCC 204508 / S288c) (Baker's yeast).